Here is an 88-residue protein sequence, read N- to C-terminus: Small ribosomal subunit protein uS15 (88 aa).

This sequence belongs to the universal ribosomal protein uS15 family. Part of the 30S ribosomal subunit. Forms a bridge to the 50S subunit in the 70S ribosome, contacting the 23S rRNA.

Its function is as follows. One of the primary rRNA binding proteins, it binds directly to 16S rRNA where it helps nucleate assembly of the platform of the 30S subunit by binding and bridging several RNA helices of the 16S rRNA. In terms of biological role, forms an intersubunit bridge (bridge B4) with the 23S rRNA of the 50S subunit in the ribosome. The chain is Small ribosomal subunit protein uS15 from Flavobacterium johnsoniae (strain ATCC 17061 / DSM 2064 / JCM 8514 / BCRC 14874 / CCUG 350202 / NBRC 14942 / NCIMB 11054 / UW101) (Cytophaga johnsonae).